The following is a 480-amino-acid chain: NADH-quinone oxidoreductase subunit N (480 aa).

14 consecutive transmembrane segments (helical) span residues 11-31 (LLPE…GVFA), 38-58 (LVAA…AGLL), 76-96 (FALY…IAAA), 105-125 (APEY…LVSM), 128-148 (LFGV…MVAF), 163-183 (LITG…IYGV), 195-215 (AFGE…ISGL), 240-260 (AAFL…RILL), 270-290 (WTAL…LLAL), 298-318 (MLAY…AALQ), 329-349 (VMIY…TIDL), 368-388 (AAAM…SGFF), 407-427 (VAVA…FGII), and 453-473 (VYAM…LAAL).

This sequence belongs to the complex I subunit 2 family. In terms of assembly, NDH-1 is composed of 14 different subunits. Subunits NuoA, H, J, K, L, M, N constitute the membrane sector of the complex.

It localises to the cell membrane. It carries out the reaction a quinone + NADH + 5 H(+)(in) = a quinol + NAD(+) + 4 H(+)(out). Its function is as follows. NDH-1 shuttles electrons from NADH, via FMN and iron-sulfur (Fe-S) centers, to quinones in the respiratory chain. The immediate electron acceptor for the enzyme in this species is believed to be a menaquinone. Couples the redox reaction to proton translocation (for every two electrons transferred, four hydrogen ions are translocated across the cytoplasmic membrane), and thus conserves the redox energy in a proton gradient. The protein is NADH-quinone oxidoreductase subunit N of Rubrobacter xylanophilus (strain DSM 9941 / JCM 11954 / NBRC 16129 / PRD-1).